Reading from the N-terminus, the 527-residue chain is Estrogen receptor beta (527 aa).

The modulating stretch occupies residues 1-145 (MDVKNSPSSL…SPSSKRDAHF (145 aa)). A phosphoserine; by MAPK mark is found at Ser-84 and Ser-102. NR C4-type zinc fingers lie at residues 146 to 166 (CAVCSDYASGYHYGVWSCEGC) and 182 to 206 (CPATNQCTIDKNRRKSCQACRLRKC). A DNA-binding region (nuclear receptor) is located at residues 146-211 (CAVCSDYASG…RLRKCYEVGM (66 aa)). One can recognise an NR LBD domain in the interval 261 to 495 (SPEQLVLTLL…DLLLEMLNAH (235 aa)). Residues 505–527 (TRSERNLAEDSESKEGSQKPQAQ) are disordered. The span at 506–521 (RSERNLAEDSESKEGS) shows a compositional bias: basic and acidic residues.

The protein belongs to the nuclear hormone receptor family. NR3 subfamily. In terms of assembly, binds DNA as a homodimer. Can form a heterodimer with ESR1. Interacts with NCOA1, NCOA3, NCOA5 and NCOA6 coactivators, leading to a strong increase of transcription of target genes. Interacts with UBE1C and AKAP13. Interacts with DNTTIP2. Interacts with CCDC62 in the presence of estradiol/E2; this interaction seems to enhance the transcription of target genes. Interacts with DNAAF4. Interacts with PRMT2. Interacts with CCAR2 (via N-terminus) in a ligand-independent manner. Interacts with RBM39, in the presence of estradiol (E2). Interacts with STUB1/CHIP. Phosphorylation at Ser-84 and Ser-102 recruits NCOA1.

Its subcellular location is the nucleus. In terms of biological role, nuclear hormone receptor. Binds estrogens with an affinity similar to that of ESR1/ER-alpha, and activates expression of reporter genes containing estrogen response elements (ERE) in an estrogen-dependent manner. This Ovis aries (Sheep) protein is Estrogen receptor beta (ESR2).